The sequence spans 1605 residues: Pentafunctional AROM polypeptide (1605 aa).

The tract at residues 1 to 384 is 3-dehydroquinate synthase; sequence MTGPTKISIL…YEPRASVVPN (384 aa). NAD(+) is bound by residues 44-46, 81-84, 114-116, and D119; these read DTN, EVSK, and GGV. R130 provides a ligand contact to 7-phospho-2-dehydro-3-deoxy-D-arabino-heptonate. Position 139 to 140 (139 to 140) interacts with NAD(+); that stretch reads TT. 7-phospho-2-dehydro-3-deoxy-D-arabino-heptonate contacts are provided by D146 and K152. Position 161 (K161) interacts with NAD(+). N162 serves as a coordination point for 7-phospho-2-dehydro-3-deoxy-D-arabino-heptonate. NAD(+)-binding positions include 179–182 and N190; that span reads FLET. E194 provides a ligand contact to Zn(2+). 7-phospho-2-dehydro-3-deoxy-D-arabino-heptonate contacts are provided by residues 194–197 and K250; that span reads EVIK. Catalysis depends on E260, which acts as the Proton acceptor; for 3-dehydroquinate synthase activity. 7-phospho-2-dehydro-3-deoxy-D-arabino-heptonate contacts are provided by residues 264–268 and H271; that span reads RNLLN. H271 provides a ligand contact to Zn(2+). H275 (proton acceptor; for 3-dehydroquinate synthase activity) is an active-site residue. Residues H287 and K356 each contribute to the 7-phospho-2-dehydro-3-deoxy-D-arabino-heptonate site. H287 lines the Zn(2+) pocket. Residues 397-842 form an EPSP synthase region; the sequence is VHPGVSTTSE…WDTLRQKFAV (446 aa). Catalysis depends on C824, which acts as the For EPSP synthase activity. The segment at 864-1055 is shikimate kinase; sequence SASVFIIGMR…KKKQHSFFVS (192 aa). An ATP-binding site is contributed by 871–878; it reads GMRGAGKT. Residues 1056-1276 form a 3-dehydroquinase region; it reads LTLPDVRGAD…AAPGQLSATD (221 aa). The active-site Proton acceptor; for 3-dehydroquinate dehydratase activity is H1179. The active-site Schiff-base intermediate with substrate; for 3-dehydroquinate dehydratase activity is K1207. The shikimate dehydrogenase stretch occupies residues 1289–1605; sequence KKRFALFGSP…LSGRTMLTCS (317 aa).

It in the N-terminal section; belongs to the sugar phosphate cyclases superfamily. Dehydroquinate synthase family. This sequence in the 2nd section; belongs to the EPSP synthase family. In the 3rd section; belongs to the shikimate kinase family. The protein in the 4th section; belongs to the type-I 3-dehydroquinase family. It in the C-terminal section; belongs to the shikimate dehydrogenase family. As to quaternary structure, homodimer. Zn(2+) serves as cofactor.

The protein localises to the cytoplasm. The catalysed reaction is 7-phospho-2-dehydro-3-deoxy-D-arabino-heptonate = 3-dehydroquinate + phosphate. It catalyses the reaction 3-dehydroquinate = 3-dehydroshikimate + H2O. It carries out the reaction shikimate + NADP(+) = 3-dehydroshikimate + NADPH + H(+). The enzyme catalyses shikimate + ATP = 3-phosphoshikimate + ADP + H(+). The catalysed reaction is 3-phosphoshikimate + phosphoenolpyruvate = 5-O-(1-carboxyvinyl)-3-phosphoshikimate + phosphate. Its pathway is metabolic intermediate biosynthesis; chorismate biosynthesis; chorismate from D-erythrose 4-phosphate and phosphoenolpyruvate: step 2/7. It participates in metabolic intermediate biosynthesis; chorismate biosynthesis; chorismate from D-erythrose 4-phosphate and phosphoenolpyruvate: step 3/7. It functions in the pathway metabolic intermediate biosynthesis; chorismate biosynthesis; chorismate from D-erythrose 4-phosphate and phosphoenolpyruvate: step 4/7. The protein operates within metabolic intermediate biosynthesis; chorismate biosynthesis; chorismate from D-erythrose 4-phosphate and phosphoenolpyruvate: step 5/7. Its pathway is metabolic intermediate biosynthesis; chorismate biosynthesis; chorismate from D-erythrose 4-phosphate and phosphoenolpyruvate: step 6/7. The AROM polypeptide catalyzes 5 consecutive enzymatic reactions in prechorismate polyaromatic amino acid biosynthesis. The protein is Pentafunctional AROM polypeptide of Aspergillus fumigatus (strain CBS 144.89 / FGSC A1163 / CEA10) (Neosartorya fumigata).